The chain runs to 263 residues: Non-homologous end joining protein Ku 3 (263 aa).

The Ku domain maps to 6–169 (FGLVSVPVQL…WADEVRDPHR (164 aa)).

This sequence belongs to the prokaryotic Ku family. In terms of assembly, homodimer. Interacts with LigD.

Its function is as follows. With LigD forms a non-homologous end joining (NHEJ) DNA repair enzyme, which repairs dsDNA breaks with reduced fidelity. Binds linear dsDNA with 5'- and 3'- overhangs but not closed circular dsDNA nor ssDNA. Recruits and stimulates the ligase activity of LigD. The protein is Non-homologous end joining protein Ku 3 of Saccharopolyspora erythraea (strain ATCC 11635 / DSM 40517 / JCM 4748 / NBRC 13426 / NCIMB 8594 / NRRL 2338).